A 66-amino-acid polypeptide reads, in one-letter code: Probable Sec-independent protein translocase protein TatE (66 aa).

A helical membrane pass occupies residues 1–21; sequence MEGISITKLLVIAVLIVLLFG. The disordered stretch occupies residues 46–66; that stretch reads ETPAAKKSDGVEAAPRVENKE.

The protein belongs to the TatA/E family. TatE subfamily.

It localises to the cell inner membrane. Part of the twin-arginine translocation (Tat) system that transports large folded proteins containing a characteristic twin-arginine motif in their signal peptide across membranes. TatE shares overlapping functions with TatA. This chain is Probable Sec-independent protein translocase protein TatE, found in Edwardsiella ictaluri (strain 93-146).